Here is a 327-residue protein sequence, read N- to C-terminus: Undecaprenyl-phosphate 4-deoxy-4-formamido-L-arabinose transferase (327 aa).

Residues 1–235 (MFDAAPIKKV…TCLTTTPLRL (235 aa)) are Cytoplasmic-facing. The chain crosses the membrane as a helical span at residues 236 to 256 (LSLLGSVIAIGGFSLSVLLIV). Residues 257–269 (LRLALGPQWAAEG) lie on the Periplasmic side of the membrane. A helical membrane pass occupies residues 270–290 (VFMLFAVLFTFIGAQFIGMGL). Over 291–327 (LGEYIGRIYNDVRARPRYFVQQVIYPESTPFTEESHQ) the chain is Cytoplasmic.

The protein belongs to the glycosyltransferase 2 family.

It localises to the cell inner membrane. The enzyme catalyses UDP-4-deoxy-4-formamido-beta-L-arabinose + di-trans,octa-cis-undecaprenyl phosphate = 4-deoxy-4-formamido-alpha-L-arabinopyranosyl di-trans,octa-cis-undecaprenyl phosphate + UDP. The protein operates within glycolipid biosynthesis; 4-amino-4-deoxy-alpha-L-arabinose undecaprenyl phosphate biosynthesis; 4-amino-4-deoxy-alpha-L-arabinose undecaprenyl phosphate from UDP-4-deoxy-4-formamido-beta-L-arabinose and undecaprenyl phosphate: step 1/2. Its pathway is bacterial outer membrane biogenesis; lipopolysaccharide biosynthesis. Catalyzes the transfer of 4-deoxy-4-formamido-L-arabinose from UDP to undecaprenyl phosphate. The modified arabinose is attached to lipid A and is required for resistance to polymyxin and cationic antimicrobial peptides. The chain is Undecaprenyl-phosphate 4-deoxy-4-formamido-L-arabinose transferase from Salmonella dublin (strain CT_02021853).